The following is a 604-amino-acid chain: NADP-dependent malic enzyme, mitochondrial (604 aa).

The disordered stretch occupies residues alanine 29–glycine 50. Catalysis depends on tyrosine 137, which acts as the Proton donor. NAD(+) is bound at residue arginine 190. The active-site Proton acceptor is the lysine 208. A divalent metal cation contacts are provided by glutamate 280, aspartate 281, and aspartate 304. Aspartate 304 lines the NAD(+) pocket. Serine 371 is subject to Phosphoserine. Asparagine 443 provides a ligand contact to NAD(+).

This sequence belongs to the malic enzymes family. The cofactor is Mg(2+). It depends on Mn(2+) as a cofactor. In terms of tissue distribution, expressed predominantly in organs with a low-division rate.

Its subcellular location is the mitochondrion matrix. The enzyme catalyses (S)-malate + NADP(+) = pyruvate + CO2 + NADPH. It catalyses the reaction oxaloacetate + H(+) = pyruvate + CO2. Catalyzes the oxidative decarboxylation of (S)-malate to pyruvate using NADP(+) as a cofactor. Can also reverse the decarboxylation reaction, but only with significantly lower efficiency. This Homo sapiens (Human) protein is NADP-dependent malic enzyme, mitochondrial.